Here is a 183-residue protein sequence, read N- to C-terminus: Capsid protein (183 aa).

Residues 150–183 (RQRGRTIRRRTPSPRRRRSQSPRRRRSQSRESQC) form a disordered region. Positions 151–176 (QRGRTIRRRTPSPRRRRSQSPRRRRS) are enriched in basic residues. Residues 158-175 (RRTPSPRRRRSQSPRRRR) carry the Bipartite nuclear localization signal motif. Phosphoserine; by host occurs at positions 162 and 170. 2 consecutive repeat copies span residues 162–169 (SPRRRRSQ) and 170–177 (SPRRRRSQ). The 2 X 8 AA repeats of S-P-R-R-R-[PR]-S-Q stretch occupies residues 162–177 (SPRRRRSQSPRRRRSQ). Residues 177-183 (QSRESQC) form an RNA binding region.

It belongs to the orthohepadnavirus core antigen family. As to quaternary structure, homodimerizes, then multimerizes. Interacts with cytosol exposed regions of viral L glycoprotein present in the reticulum-to-Golgi compartment. Interacts with human FLNB. Phosphorylated form interacts with host importin alpha; this interaction depends on the exposure of the NLS, which itself depends upon genome maturation and/or phosphorylation of the capsid protein. Interacts with host NUP153. Phosphorylated by host SRPK1, SRPK2, and maybe protein kinase C or GAPDH. Phosphorylation is critical for pregenomic RNA packaging. Protein kinase C phosphorylation is stimulated by HBx protein and may play a role in transport of the viral genome to the nucleus at the late step during the viral replication cycle.

The protein resides in the virion. It localises to the host cytoplasm. In terms of biological role, self assembles to form an icosahedral capsid. Most capsids appear to be large particles with an icosahedral symmetry of T=4 and consist of 240 copies of capsid protein, though a fraction forms smaller T=3 particles consisting of 180 capsid proteins. Entering capsids are transported along microtubules to the nucleus. Phosphorylation of the capsid is thought to induce exposure of nuclear localization signal in the C-terminal portion of the capsid protein that allows binding to the nuclear pore complex via the importin (karyopherin-) alpha and beta. Capsids are imported in intact form through the nuclear pore into the nuclear basket, where it probably binds NUP153. Only capsids that contain the mature viral genome can release the viral DNA and capsid protein into the nucleoplasm. Immature capsids get stuck in the basket. Capsids encapsulate the pre-genomic RNA and the P protein. Pre-genomic RNA is reverse-transcribed into DNA while the capsid is still in the cytoplasm. The capsid can then either be directed to the nucleus, providing more genomes for transcription, or bud through the endoplasmic reticulum to provide new virions. The polypeptide is Capsid protein (Homo sapiens (Human)).